The sequence spans 187 residues: Threonylcarbamoyl-AMP synthase (187 aa).

One can recognise a YrdC-like domain in the interval 4-187 (TLDLDRAVAT…DARSGQILRD (184 aa)).

Belongs to the SUA5 family. TsaC subfamily.

It is found in the cytoplasm. It carries out the reaction L-threonine + hydrogencarbonate + ATP = L-threonylcarbamoyladenylate + diphosphate + H2O. Its function is as follows. Required for the formation of a threonylcarbamoyl group on adenosine at position 37 (t(6)A37) in tRNAs that read codons beginning with adenine. Catalyzes the conversion of L-threonine, HCO(3)(-)/CO(2) and ATP to give threonylcarbamoyl-AMP (TC-AMP) as the acyladenylate intermediate, with the release of diphosphate. In Xanthomonas euvesicatoria pv. vesicatoria (strain 85-10) (Xanthomonas campestris pv. vesicatoria), this protein is Threonylcarbamoyl-AMP synthase.